The sequence spans 151 residues: Type 4 adapter protein IcmW (151 aa).

The T4BSS is a complex nanomachine composed of several subcomplexes. This subunit is part of the Type IV Coupling Complex (T4CC), a subcomplex composed of the DotLMNYZ core and the IcmSW-LvgA adapter subunits, linked by the C-terminal tail of DotL. Interacts with IcmS. IcmS and IcmW form a stable complex. Interaction with IcmS greatly enhances the stability of IcmW. Interacts directly with the type 4 coupling protein DotL. Interacts with LvgA. Interacts with effector proteins.

Its subcellular location is the cytoplasm. With respect to regulation, interaction with DotL is critical for the export of IcmSW-dependent substrates. In terms of biological role, component of the Dot/Icm type IVB secretion system (T4BSS), which is used to inject bacterial effector proteins into eukaryotic host cells. Part of a subcomplex which recruits effector proteins and delivers them to the core transmembrane subcomplex. The IcmS/IcmW protein complex plays an important role in protein translocation by interacting with multiple Dot/Icm effector proteins to facilitate their translocation into host cells. Interaction promotes conformational changes in the effector protein, which may facilitate display of a C-terminal translocation signal. May maintain the substrates in a translocation competent form. Required for intracellular growth in host cells, replicative phagosome formation and phagosome trafficking. The sequence is that of Type 4 adapter protein IcmW from Legionella pneumophila subsp. pneumophila (strain Philadelphia 1 / ATCC 33152 / DSM 7513).